A 1418-amino-acid polypeptide reads, in one-letter code: Alpha-latrotoxin-Lhe1a (1418 aa).

The first 20 residues, 1–20, serve as a signal peptide directing secretion; it reads MIFVGETMERANHSLVRLRR. The segment at 17-20 is furin-like endopeptidase recognition region; it reads RLRR. Positions 238-257 are helix H8 is the probable transmembrane region of the tetrameric pore inserted in the target cell membrane; the sequence is VLYALLYGTQTYISVMFFLL. A disulfide bridge connects residues cysteine 413 and cysteine 1066. ANK repeat units lie at residues 458-489, 490-521, 525-554, 559-589, 593-622, 626-656, 660-690, 695-723, 729-758, 762-791, 795-824, 828-857, 862-891, 895-924, 928-957, 971-1003, 1004-1033, 1035-1064, 1068-1097, 1101-1131, 1137-1166, and 1170-1199; these read LYNA…ATFD, QGRT…ELNQ, KGYT…SINS, FLQT…NINE, DGFT…DVNA, KGLT…DINA, NNMT…NANV, GLLS…NVNV, GGIT…NIEQ, EKYT…NFEA, SGAT…NWRD, NGQM…TVLD, NSDT…DINT, NGHA…NVYI, NGMN…KFEW, EECA…GNFN, ICGP…SVDG, KTDT…KVNH, NGMT…DFRR, RGAT…DINI, DKET…DVTI, and YDKT…KFRR. Residues 1026–1032 form a 4C4.1 epitope region; sequence EEVLSVD. Residues 1196–1199 form a furin-like endopeptidase recognition region region; that stretch reads KFRR. Positions 1200–1418 are excised as a propeptide; the sequence is EYKSSYGEHS…SEKKIQKISI (219 aa).

Belongs to the cationic peptide 01 (latrotoxin) family. 03 (alpha-latrotoxin) subfamily. Homotetramer in membranes. Processed by furin-like proteases at both the N- and C-termini. In terms of tissue distribution, expressed in venom gland, cephalothorax, and abdomen tissues from both males and females.

The protein resides in the secreted. Its subcellular location is the target cell membrane. In terms of biological role, presynaptic neurotoxin that causes massive release of neurotransmitters from vertebrate (but not invertebrate) nerve terminals and endocrine cells via a complex mechanism involving activation of receptor(s) and toxin insertion into the plasma membrane with subsequent pore formation. Binds to neurexin-1-alpha (NRXN1) in a calcium dependent manner, adhesion G protein-coupled receptor L1 (ADGRL1, also termed latrophilin-1 and calcium-independent receptor of latrotoxin (CIRL)), and receptor-type tyrosine-protein phosphatase S (PTPRS), also termed PTP sigma. NRXN1 and PTPRS are suggested to provide a platform for binding and subsequent pore formation events. In contrast, binding to ADGRL1 does not involve oligomerization and channel formation, but direct downstream stimulation of the synaptic fusion machinery. The protein is Alpha-latrotoxin-Lhe1a of Latrodectus hesperus (Western black widow spider).